Consider the following 483-residue polypeptide: Glutamate--tRNA ligase (483 aa).

The 'HIGH' region signature appears at 11 to 21 (PSPTGHLHIGN). Zn(2+) is bound by residues Cys-108, Cys-110, Cys-135, and His-137. A 'KMSKS' region motif is present at residues 252 to 256 (KLSKR). Lys-255 provides a ligand contact to ATP.

It belongs to the class-I aminoacyl-tRNA synthetase family. Glutamate--tRNA ligase type 1 subfamily. Monomer. The cofactor is Zn(2+).

The protein resides in the cytoplasm. It catalyses the reaction tRNA(Glu) + L-glutamate + ATP = L-glutamyl-tRNA(Glu) + AMP + diphosphate. In terms of biological role, catalyzes the attachment of glutamate to tRNA(Glu) in a two-step reaction: glutamate is first activated by ATP to form Glu-AMP and then transferred to the acceptor end of tRNA(Glu). This Bacillus pumilus (strain SAFR-032) protein is Glutamate--tRNA ligase.